A 341-amino-acid polypeptide reads, in one-letter code: L-threonine 3-dehydrogenase (341 aa).

Cysteine 38 is a Zn(2+) binding site. Catalysis depends on charge relay system residues threonine 40 and histidine 43. The Zn(2+) site is built by histidine 63, glutamate 64, cysteine 93, cysteine 96, cysteine 99, and cysteine 107. NAD(+) is bound by residues isoleucine 175, aspartate 195, arginine 200, leucine 262–isoleucine 264, and isoleucine 286–tyrosine 287.

Belongs to the zinc-containing alcohol dehydrogenase family. Homotetramer. The cofactor is Zn(2+).

It is found in the cytoplasm. The catalysed reaction is L-threonine + NAD(+) = (2S)-2-amino-3-oxobutanoate + NADH + H(+). Its pathway is amino-acid degradation; L-threonine degradation via oxydo-reductase pathway; glycine from L-threonine: step 1/2. In terms of biological role, catalyzes the NAD(+)-dependent oxidation of L-threonine to 2-amino-3-ketobutyrate. In Shigella dysenteriae serotype 1 (strain Sd197), this protein is L-threonine 3-dehydrogenase.